A 91-amino-acid polypeptide reads, in one-letter code: Large ribosomal subunit protein uL23c (91 aa).

It belongs to the universal ribosomal protein uL23 family. Part of the 50S ribosomal subunit.

The protein localises to the plastid. It localises to the chloroplast. Its function is as follows. Binds to 23S rRNA. The chain is Large ribosomal subunit protein uL23c (rpl23) from Huperzia lucidula (Shining clubmoss).